Consider the following 641-residue polypeptide: tRNA 5-methylaminomethyl-2-thiouridine biosynthesis bifunctional protein MnmC (641 aa).

Positions 1-219 (MTVSKILKQI…PYPICSAAVT (219 aa)) are tRNA (mnm(5)s(2)U34)-methyltransferase. The FAD-dependent cmnm(5)s(2)U34 oxidoreductase stretch occupies residues 232–641 (IGGGVASACL…GKALEVGVEV (410 aa)).

The protein in the N-terminal section; belongs to the methyltransferase superfamily. tRNA (mnm(5)s(2)U34)-methyltransferase family. It in the C-terminal section; belongs to the DAO family. FAD serves as cofactor.

Its subcellular location is the cytoplasm. It carries out the reaction 5-aminomethyl-2-thiouridine(34) in tRNA + S-adenosyl-L-methionine = 5-methylaminomethyl-2-thiouridine(34) in tRNA + S-adenosyl-L-homocysteine + H(+). Functionally, catalyzes the last two steps in the biosynthesis of 5-methylaminomethyl-2-thiouridine (mnm(5)s(2)U) at the wobble position (U34) in tRNA. Catalyzes the FAD-dependent demodification of cmnm(5)s(2)U34 to nm(5)s(2)U34, followed by the transfer of a methyl group from S-adenosyl-L-methionine to nm(5)s(2)U34, to form mnm(5)s(2)U34. The sequence is that of tRNA 5-methylaminomethyl-2-thiouridine biosynthesis bifunctional protein MnmC from Shewanella pealeana (strain ATCC 700345 / ANG-SQ1).